Reading from the N-terminus, the 77-residue chain is Immune protein Tis1 (77 aa).

Immunity protein that plays a role in preventing early activation of toxin Tas1. The polypeptide is Immune protein Tis1 (tis1) (Pseudomonas aeruginosa (strain UCBPP-PA14)).